The chain runs to 126 residues: Fluoride-specific ion channel FluC (126 aa).

4 helical membrane-spanning segments follow: residues 4-24 (SLLSIACGAVLGAWLRWFVGL), 35-55 (LGTILVNLVGGFIIGFAIALF), 67-87 (FVITGFCGALTTFSTFSAEVI), and 97-117 (FAIALITIHLMGSLLCTVLGL). Residues G74 and T77 each contribute to the Na(+) site.

The protein belongs to the fluoride channel Fluc/FEX (TC 1.A.43) family.

It localises to the cell inner membrane. It catalyses the reaction fluoride(in) = fluoride(out). Its activity is regulated as follows. Na(+) is not transported, but it plays an essential structural role and its presence is essential for fluoride channel function. In terms of biological role, fluoride-specific ion channel. Important for reducing fluoride concentration in the cell, thus reducing its toxicity. In Acinetobacter baylyi (strain ATCC 33305 / BD413 / ADP1), this protein is Fluoride-specific ion channel FluC.